Here is a 507-residue protein sequence, read N- to C-terminus: Maturase K (507 aa).

It belongs to the intron maturase 2 family. MatK subfamily.

The protein localises to the plastid. Its subcellular location is the chloroplast. Usually encoded in the trnK tRNA gene intron. Probably assists in splicing its own and other chloroplast group II introns. The sequence is that of Maturase K from Humulus lupulus (European hop).